We begin with the raw amino-acid sequence, 294 residues long: 33 kDa chaperonin (294 aa).

Intrachain disulfides connect cysteine 238/cysteine 240 and cysteine 271/cysteine 274.

It belongs to the HSP33 family. In terms of processing, under oxidizing conditions two disulfide bonds are formed involving the reactive cysteines. Under reducing conditions zinc is bound to the reactive cysteines and the protein is inactive.

The protein localises to the cytoplasm. Functionally, redox regulated molecular chaperone. Protects both thermally unfolding and oxidatively damaged proteins from irreversible aggregation. Plays an important role in the bacterial defense system toward oxidative stress. In Staphylococcus haemolyticus (strain JCSC1435), this protein is 33 kDa chaperonin.